The chain runs to 561 residues: Chaperonin GroEL 1 (561 aa).

Residues 29–32 (TMGP), 86–90 (DGTTT), Gly413, and Asp495 contribute to the ATP site.

It belongs to the chaperonin (HSP60) family. In terms of assembly, forms a cylinder of 14 subunits composed of two heptameric rings stacked back-to-back. Interacts with the co-chaperonin GroES.

The protein resides in the cytoplasm. It carries out the reaction ATP + H2O + a folded polypeptide = ADP + phosphate + an unfolded polypeptide.. Its function is as follows. Together with its co-chaperonin GroES, plays an essential role in assisting protein folding. The GroEL-GroES system forms a nano-cage that allows encapsulation of the non-native substrate proteins and provides a physical environment optimized to promote and accelerate protein folding. The sequence is that of Chaperonin GroEL 1 from Trichodesmium erythraeum (strain IMS101).